Consider the following 258-residue polypeptide: MNAFDFLTPPRSGKPRKNGITMVLDKGMGPASARDLMEISSDYVDFIKFGWGTLPLHRRDTVKEKVDMYRSFDVEPYPGGTLFEIAHLNDKVEEYFQEARSLGFETLEISNGTVEIETEEKCRLIEMAVDEGFMVLSEVGKKDPERDRLLEPDDRVRLVRADLRAGASMVLMEARESGQNIGIYDERGNIREDEFNHLTDRLPMDRIIWEAPQKSQQVYFILKIGPDVNLGNIPPEEITALETIRRGLRGDTLGKVNL.

The protein belongs to the phosphosulfolactate synthase family.

The enzyme catalyses (2R)-O-phospho-3-sulfolactate = phosphoenolpyruvate + sulfite + H(+). Its pathway is cofactor biosynthesis; coenzyme M biosynthesis; sulfoacetaldehyde from phosphoenolpyruvate and sulfite: step 1/4. Its function is as follows. Catalyzes the addition of sulfite to phosphoenolpyruvate (PEP) to yield (2R)-phospho-3-sulfolactate (PSL). The sequence is that of Phosphosulfolactate synthase (comA) from Methanothermobacter thermautotrophicus (strain ATCC 29096 / DSM 1053 / JCM 10044 / NBRC 100330 / Delta H) (Methanobacterium thermoautotrophicum).